We begin with the raw amino-acid sequence, 130 residues long: Transcription antitermination protein NusB (130 aa).

This sequence belongs to the NusB family.

Functionally, involved in transcription antitermination. Required for transcription of ribosomal RNA (rRNA) genes. Binds specifically to the boxA antiterminator sequence of the ribosomal RNA (rrn) operons. The chain is Transcription antitermination protein NusB from Sulfurovum sp. (strain NBC37-1).